The chain runs to 392 residues: Ribonuclease D (392 aa).

Positions 12–178 (LIETTEALAA…PVYEGLRARL (167 aa)) constitute a 3'-5' exonuclease domain. Positions 217 to 298 (NRRQLALVKA…ASTKAIPDAE (82 aa)) constitute an HRDC domain.

The protein belongs to the RNase D family. Requires a divalent metal cation as cofactor.

The protein localises to the cytoplasm. The enzyme catalyses Exonucleolytic cleavage that removes extra residues from the 3'-terminus of tRNA to produce 5'-mononucleotides.. Its function is as follows. Exonuclease involved in the 3' processing of various precursor tRNAs. Initiates hydrolysis at the 3'-terminus of an RNA molecule and releases 5'-mononucleotides. The polypeptide is Ribonuclease D (Acidiphilium cryptum (strain JF-5)).